A 316-amino-acid polypeptide reads, in one-letter code: Arginine transport system permease protein ArgU (316 aa).

Over residues 1-14 the composition is skewed to polar residues; it reads MSDLNQGPGASTAQ. The tract at residues 1-20 is disordered; the sequence is MSDLNQGPGASTAQPKPIEA. A run of 6 helical transmembrane segments spans residues 29 to 49, 74 to 94, 108 to 128, 151 to 171, 217 to 237, and 251 to 271; these read WVAA…ALNN, IALT…LAVM, LYLW…WGLL, MFLL…AEIV, LISM…LELY, and VPML…LMVG. The ABC transmembrane type-1 domain maps to 70–274; that stretch reads ALHTIALTLL…TSILMVGQYY (205 aa).

Belongs to the binding-protein-dependent transport system permease family. The complex is probably composed of two ATP-binding proteins (ArgV), two transmembrane proteins (ArgU) and a solute-binding protein (ArgT).

The protein localises to the cell membrane. Functionally, part of the ABC transporter complex ArgTUV involved in L-arginine import. May also transport L-citrulline. Probably responsible for the translocation of the substrate across the membrane. The protein is Arginine transport system permease protein ArgU of Corynebacterium glutamicum (strain ATCC 13032 / DSM 20300 / JCM 1318 / BCRC 11384 / CCUG 27702 / LMG 3730 / NBRC 12168 / NCIMB 10025 / NRRL B-2784 / 534).